The primary structure comprises 322 residues: Follistatin-A (322 aa).

Positions 1–32 are cleaved as a signal peptide; sequence MLRMLKRQQLHPGMILLLFWLCYLIEDQKVQA. Positions 33-106 constitute a TB domain; sequence GNCWLQQGKN…TCDNVDCGPG (74 aa). Disulfide bonds link C35–C58, C45–C91, C59–C94, C98–C109, C103–C119, C121–C153, C125–C146, and C135–C167. An N-linked (GlcNAc...) asparagine glycan is attached at N75. The region spanning 97-120 is the Follistatin-like 1 domain; that stretch reads TCDNVDCGPGKRCKMNRRSKPRCV. Kazal-like domains lie at 103–169, 189–244, and 267–321; these read CGPG…KCKK, NAYC…KCIK, and RGRC…SCNC. The N-linked (GlcNAc...) asparagine glycan is linked to N127. In terms of domain architecture, Follistatin-like 2 spans 170–193; sequence TCRDVLCPGSSTCVVDQTNNAYCV. 3 disulfide bridges follow: C195–C228, C199–C221, and C210–C242. The Follistatin-like 3 domain occupies 247–271; it reads SCDDIHCSAGKKCLWDAKMSRGRCA. Cystine bridges form between C273-C305, C277-C298, and C287-C319. N-linked (GlcNAc...) asparagine glycosylation is present at N291.

Monomer. Not expressed in the organizer region. Expression in gastrulating embryos is confined to anterior and paraxial regions, which give rise to head mesoderm and the first five somites. In addition, expressed transiently in a subset of cells in the posterior notochord anlage. Later, expression is seen in brain, eyes and somites.

Binds directly to activin and functions as an activin antagonist. Specific inhibitor of the biosynthesis and secretion of pituitary follicle stimulating hormone (fsh). Inhibits bmp-signaling during later stages of development including late phases of dorsoventral patterning, to refine the early pattern set up by the interaction of chordino and bmp2/4. Not involved in organizer function or early phases of dorsoventral pattern formation. The chain is Follistatin-A (fsta) from Danio rerio (Zebrafish).